The chain runs to 391 residues: ATP phosphoribosyltransferase regulatory subunit (391 aa).

This sequence belongs to the class-II aminoacyl-tRNA synthetase family. HisZ subfamily. As to quaternary structure, heteromultimer composed of HisG and HisZ subunits.

It is found in the cytoplasm. Its pathway is amino-acid biosynthesis; L-histidine biosynthesis; L-histidine from 5-phospho-alpha-D-ribose 1-diphosphate: step 1/9. In terms of biological role, required for the first step of histidine biosynthesis. May allow the feedback regulation of ATP phosphoribosyltransferase activity by histidine. This is ATP phosphoribosyltransferase regulatory subunit from Clostridium kluyveri (strain ATCC 8527 / DSM 555 / NBRC 12016 / NCIMB 10680 / K1).